The sequence spans 389 residues: Tryptophan synthase beta chain (389 aa).

An N6-(pyridoxal phosphate)lysine modification is found at K84.

The protein belongs to the TrpB family. As to quaternary structure, tetramer of two alpha and two beta chains. The cofactor is pyridoxal 5'-phosphate.

It carries out the reaction (1S,2R)-1-C-(indol-3-yl)glycerol 3-phosphate + L-serine = D-glyceraldehyde 3-phosphate + L-tryptophan + H2O. It participates in amino-acid biosynthesis; L-tryptophan biosynthesis; L-tryptophan from chorismate: step 5/5. In terms of biological role, the beta subunit is responsible for the synthesis of L-tryptophan from indole and L-serine. In Clostridium novyi (strain NT), this protein is Tryptophan synthase beta chain.